The sequence spans 995 residues: Meckelin (995 aa).

The first 36 residues, 1-36, serve as a signal peptide directing secretion; it reads MATRGGAGVAMAVWSLLSARAVTAFLLLFLPRFLQA. The tract at residues 37 to 280 is cysteine-rich; sequence QTFSFPFQQP…FQFIFENTAG (244 aa). Residues 37-519 are Extracellular-facing; the sequence is QTFSFPFQQP…SVTYEMDHGE (483 aa). 11 disulfide bridges follow: C49–C62, C65–C78, C80–C97, C100–C114, C117–C127, C129–C150, C153–C170, C173–C184, C186–C197, C237–C246, and C253–C268. An N-linked (GlcNAc...) asparagine glycan is attached at N141. N-linked (GlcNAc...) asparagine glycosylation is present at N179. Residue N242 is glycosylated (N-linked (GlcNAc...) asparagine). N-linked (GlcNAc...) asparagine glycosylation occurs at N318. A disulfide bond links C357 and C378. Residues 520-548 form a helical membrane-spanning segment; sequence AHVQTDIALGVLGGLAVLASLLKTAGWKR. The Cytoplasmic portion of the chain corresponds to 549 to 558; the sequence is RIGSPMIDLQ. A helical membrane pass occupies residues 559–590; sequence TVVKFLVYYAGDLANVFFIITVGTGLYWLIFF. Over 591–603 the chain is Extracellular; that stretch reads KAQKSVSVLLPMP. Residues 604 to 631 traverse the membrane as a helical segment; that stretch reads IQEERFVTYVGCAFALKALQFLHKLISQ. Residues 632 to 670 lie on the Cytoplasmic side of the membrane; it reads ITIDVFFIDWERPKGKVLKAVEGEGGVRSATVPVSIWRT. The segment at residues 671-679 is an intramembrane region (helical); it reads YFVANEWNE. A discontinuously helical membrane pass occupies residues 671-701; that stretch reads YFVANEWNEIQTVRKINSLFQVLTVLFFLEV. An intramembrane segment occupies 680–688; it reads IQTVRKINS. Positions 689–701 form an intramembrane region, helical; the sequence is LFQVLTVLFFLEV. At 702 to 731 the chain is on the extracellular side; sequence VGFKNLALMDSSSSLSRNPPSYIAPYSCIL. The segment at residues 732–757 is an intramembrane region (helical); it reads RYAVSAALWLAIGIIQVVFFAVFYER. The chain crosses the membrane as a discontinuously helical span at residues 732–771; sequence RYAVSAALWLAIGIIQVVFFAVFYERFIEDKIRQFVDLCS. Residues 758–762 lie within the membrane without spanning it; sequence FIEDK. Residues 763–771 constitute an intramembrane region (helical); the sequence is IRQFVDLCS. Topologically, residues 772–926 are cytoplasmic; the sequence is MSNISVFLLS…SIFYNDEGYS (155 aa). Residues 828–917 are a coiled coil; that stretch reads GQTFEIAISN…MEFMEPMEKS (90 aa). An intramembrane region (helical) is located at residues 927 to 929; it reads FSS. A discontinuously helical membrane pass occupies residues 927–952; it reads FSSVLYYGNEATLLIFDLLFFCVVDL. Residues 930 to 936 lie within the membrane without spanning it; the sequence is VLYYGNE. The segment at residues 937-952 is an intramembrane region (helical); sequence ATLLIFDLLFFCVVDL. The Extracellular segment spans residues 953–957; that stretch reads ACQNF. The chain crosses the membrane as a helical span at residues 958 to 985; the sequence is ILASFLTYLQQEIFRYIRNTVGQKNLAS. At 986 to 995 the chain is on the cytoplasmic side; it reads KTLVDQRFLI.

As to quaternary structure, homodimer. Part of the tectonic-like complex (also named B9 complex). Interacts with DNAJB9, DNAJC10 and mutated SFTPC. Interacts with SYNE2 during the early establishment of cell polarity. Interacts (via C-terminus) with FLNA. Interacts with TMEM218. Interacts with WNT5A. Interacts with ROR2. As to expression, widely expressed in adult and fetal tissues. Expressed at higher level in spinal cord.

Its subcellular location is the cell membrane. The protein resides in the endoplasmic reticulum membrane. It is found in the cell projection. It localises to the cilium. The protein localises to the cytoplasm. Its subcellular location is the cytoskeleton. The protein resides in the cilium basal body. Its function is as follows. Required for ciliary structure and function. Part of the tectonic-like complex which is required for tissue-specific ciliogenesis and may regulate ciliary membrane composition. Involved in centrosome migration to the apical cell surface during early ciliogenesis. Involved in the regulation of cilia length and appropriate number through the control of centrosome duplication. Is a key regulator of stereociliary bundle orientation. Required for epithelial cell branching morphology. Essential for endoplasmic reticulum-associated degradation (ERAD) of surfactant protein C (SFTPC). Involved in the negative regulation of canonical Wnt signaling, and activation of the non-canonical cascade stimulated by WNT5A. In non-canonical Wnt signaling, it may act as ROR2 coreceptor. The chain is Meckelin (TMEM67) from Homo sapiens (Human).